The sequence spans 296 residues: Homoserine kinase (296 aa).

Residue 84–94 (PLARGLGSSSS) coordinates ATP.

Belongs to the GHMP kinase family. Homoserine kinase subfamily.

The protein resides in the cytoplasm. The enzyme catalyses L-homoserine + ATP = O-phospho-L-homoserine + ADP + H(+). The protein operates within amino-acid biosynthesis; L-threonine biosynthesis; L-threonine from L-aspartate: step 4/5. Its function is as follows. Catalyzes the ATP-dependent phosphorylation of L-homoserine to L-homoserine phosphate. This is Homoserine kinase from Lactococcus lactis subsp. lactis (strain IL1403) (Streptococcus lactis).